The following is a 522-amino-acid chain: Maturase K (522 aa).

This sequence belongs to the intron maturase 2 family. MatK subfamily.

The protein resides in the plastid. Its subcellular location is the chloroplast. Its function is as follows. Usually encoded in the trnK tRNA gene intron. Probably assists in splicing its own and other chloroplast group II introns. In Iris orientalis (Yellowband iris), this protein is Maturase K.